Here is a 37-residue protein sequence, read N- to C-terminus: Large ribosomal subunit protein bL36 (37 aa).

The protein belongs to the bacterial ribosomal protein bL36 family.

This Maridesulfovibrio salexigens (strain ATCC 14822 / DSM 2638 / NCIMB 8403 / VKM B-1763) (Desulfovibrio salexigens) protein is Large ribosomal subunit protein bL36.